The following is a 357-amino-acid chain: Thiamine thiazole synthase 1, chloroplastic (357 aa).

The transit peptide at 1 to 51 (MSISAAGVATGLGANVELKSNVGSSSSSVAGVRLFTSRKAQLRRCAAPATS) directs the protein to the chloroplast. Substrate contacts are provided by residues Ala-103, 123 to 124 (EQ), Gly-131, and Ala-196. Cys-225 is subject to 2,3-didehydroalanine (Cys). Residues Asp-227, His-242, Met-294, and 304 to 306 (RMG) each bind substrate.

The protein belongs to the THI4 family. As to quaternary structure, homooctamer. Fe cation is required as a cofactor. Post-translationally, during the catalytic reaction, a sulfide is transferred from Cys-225 to a reaction intermediate, generating a dehydroalanine residue.

It is found in the plastid. The protein resides in the chloroplast. It carries out the reaction [ADP-thiazole synthase]-L-cysteine + glycine + NAD(+) = [ADP-thiazole synthase]-dehydroalanine + ADP-5-ethyl-4-methylthiazole-2-carboxylate + nicotinamide + 3 H2O + 2 H(+). In terms of biological role, involved in biosynthesis of the thiamine precursor thiazole. Catalyzes the conversion of NAD and glycine to adenosine diphosphate 5-(2-hydroxyethyl)-4-methylthiazole-2-carboxylic acid (ADT), an adenylated thiazole intermediate. The reaction includes an iron-dependent sulfide transfer from a conserved cysteine residue of the protein to a thiazole intermediate. The enzyme can only undergo a single turnover, which suggests it is a suicide enzyme. May have additional roles in adaptation to various stress conditions and in DNA damage tolerance. The protein is Thiamine thiazole synthase 1, chloroplastic of Physcomitrium patens (Spreading-leaved earth moss).